We begin with the raw amino-acid sequence, 558 residues long: Inositol-3-phosphate synthase (558 aa).

The interval 1-34 (MSPTALDACDHHDSFSLPAQDQSKVHPSARRTPE) is disordered. NAD(+) is bound by residues Gly-99, Gly-100, Asn-101, Asn-102, Asp-174, Ser-210, Ile-211, Gln-221, Arg-224, Thr-262, Ala-263, Asn-264, Thr-265, Gly-313, Ser-314, Asp-338, Ser-341, Asn-372, Asn-373, Asp-374, Lys-387, Gly-439, Asp-440, Asp-468, and Ser-469.

Belongs to the myo-inositol 1-phosphate synthase family. Homotetramer. Requires NAD(+) as cofactor.

Its subcellular location is the cytoplasm. It catalyses the reaction D-glucose 6-phosphate = 1D-myo-inositol 3-phosphate. It participates in polyol metabolism; myo-inositol biosynthesis; myo-inositol from D-glucose 6-phosphate: step 1/2. Key enzyme in myo-inositol biosynthesis pathway that catalyzes the conversion of glucose 6-phosphate to 1-myo-inositol 1-phosphate in a NAD-dependent manner. Rate-limiting enzyme in the synthesis of all inositol-containing compounds. The protein is Inositol-3-phosphate synthase of Cryptococcus neoformans var. grubii serotype A (strain H99 / ATCC 208821 / CBS 10515 / FGSC 9487) (Filobasidiella neoformans var. grubii).